A 92-amino-acid polypeptide reads, in one-letter code: DNA-binding protein HU (92 aa).

Residues Ala58–Ser92 form a disordered region.

It belongs to the bacterial histone-like protein family. Homodimer.

Histone-like DNA-binding protein which is capable of wrapping DNA to stabilize it, and thus to prevent its denaturation under extreme environmental conditions. The polypeptide is DNA-binding protein HU (hup) (Caulobacter vibrioides (strain ATCC 19089 / CIP 103742 / CB 15) (Caulobacter crescentus)).